The primary structure comprises 437 residues: GTPase Der (437 aa).

EngA-type G domains lie at 3-168 (PLIA…PESE) and 178-353 (VKLA…RNRS). Residues 9-16 (GRPNVGKS), 56-60 (DTGGY), 120-123 (NKVE), 184-191 (GRPNVGKS), 231-235 (DTAGL), and 296-299 (NKWD) each bind GTP. In terms of domain architecture, KH-like spans 354–437 (RKISTSSLNR…VPISLRFMEK (84 aa)).

This sequence belongs to the TRAFAC class TrmE-Era-EngA-EngB-Septin-like GTPase superfamily. EngA (Der) GTPase family. As to quaternary structure, associates with the 50S ribosomal subunit.

GTPase that plays an essential role in the late steps of ribosome biogenesis. This chain is GTPase Der, found in Chlorobium limicola (strain DSM 245 / NBRC 103803 / 6330).